We begin with the raw amino-acid sequence, 127 residues long: Ribonuclease VapC9 (127 aa).

A PINc domain is found at 2-115 (IVVDASAALA…VTADLRLSDT (114 aa)). Mg(2+)-binding residues include aspartate 5 and aspartate 91.

This sequence belongs to the PINc/VapC protein family. It depends on Mg(2+) as a cofactor.

Its function is as follows. Toxic component of a type II toxin-antitoxin (TA) system. An RNase. The cognate antitoxin is VapB9. The polypeptide is Ribonuclease VapC9 (Mycobacterium tuberculosis (strain CDC 1551 / Oshkosh)).